Consider the following 339-residue polypeptide: Phenylalanine--tRNA ligase alpha subunit (339 aa).

Glu253 contributes to the Mg(2+) binding site.

Belongs to the class-II aminoacyl-tRNA synthetase family. Phe-tRNA synthetase alpha subunit type 1 subfamily. Tetramer of two alpha and two beta subunits. Mg(2+) is required as a cofactor.

Its subcellular location is the cytoplasm. It catalyses the reaction tRNA(Phe) + L-phenylalanine + ATP = L-phenylalanyl-tRNA(Phe) + AMP + diphosphate + H(+). This is Phenylalanine--tRNA ligase alpha subunit from Geobacter sulfurreducens (strain ATCC 51573 / DSM 12127 / PCA).